Reading from the N-terminus, the 92-residue chain is Auxin-responsive protein SAUR28 (92 aa).

The protein belongs to the ARG7 family. Higher expression in thermo-responsive cultivars (e.g. cv. Alst-1, cv. Ang-0 and cv. Com-0) than in low thermo-responsive cultivars (e.g. cv. Dja-1, cv. El-0 and cv. Kon).

The protein resides in the cell membrane. Functions as a positive effector of cell expansion through modulation of auxin transport. Involved in thermo-responsiveness of plant architecture. Enhances plasma membrane H(+)-ATPase. The polypeptide is Auxin-responsive protein SAUR28 (Arabidopsis thaliana (Mouse-ear cress)).